We begin with the raw amino-acid sequence, 303 residues long: Recombination-associated protein RdgC (303 aa).

This sequence belongs to the RdgC family.

Its subcellular location is the cytoplasm. The protein localises to the nucleoid. Its function is as follows. May be involved in recombination. This chain is Recombination-associated protein RdgC, found in Shewanella sediminis (strain HAW-EB3).